A 645-amino-acid chain; its full sequence is MILCRGLFMAVIGIDLGTTNSCVAVMEGGDAKAIENSEGARTTPSIVAFTDSEVLVGDPAKRQATTNAKNTIYASKRLIGRRYQDTRDIKTSYDIVSAKNGDAWIKVRDKDYSPSQIGALILEKMKETAERHLGCKVEKAVITVPAYFDDAQRQATKDAGKIAGLDVIRIINEPTAAALAYGLNKSDKQKVIAVYDLGGGTFDVSILEIADGVFEVKSTNGDTMLGGEDFDHAIMEYLMDDFKKSTGIDLHSDAMAMQRIKEAAEKAKIELSSRMETDINLPFLSSDSTGPKHLSLKLTRATFENLVSDLVKRTIEPCKKALKDAGISADKIDEVVLVGGMTRVPKIIQTVKEFFGKEPHKGVNPDEVVAIGAAIQGGILAGDVRDVLLLDVTPLSLGIETLGGVFTPLIERNTTIPTKKSQVFSTAEDGQTAVTIKVFQGERKMANDNKLLGQFSLEGIPPAPRGMPQIEVTFDIDANGIVHVSAKDKASGKEQAIRIQSSGGLTDDEIQNMIKEAESKAEEDEKRKKFVEVKNNAENLVHSTEKSLKEHGDKISNADKLDIENAIRDLKDCISKDNIEDTDTMQNKLDHLMKVSMKLGEALYSNTNNATAGDNNTTDTGSSSNSDGSKVVDSDYQEIDKKDGK.

Phosphothreonine; by autocatalysis is present on Thr201. A compositionally biased stretch (low complexity) spans 606 to 629 (NTNNATAGDNNTTDTGSSSNSDGS). The disordered stretch occupies residues 606–645 (NTNNATAGDNNTTDTGSSSNSDGSKVVDSDYQEIDKKDGK). Basic and acidic residues predominate over residues 630 to 645 (KVVDSDYQEIDKKDGK).

The protein belongs to the heat shock protein 70 family.

Acts as a chaperone. The sequence is that of Chaperone protein DnaK from Ehrlichia ruminantium (strain Gardel).